Reading from the N-terminus, the 1941-residue chain is MAEPQKSSKVAIKKMEDDLPPPPIPDSIQVIAPASQDPNPLPVPPPKQAFSKFYQQRQVNELKRLYRHMHPELRKNLEEAVTEDLAEMLNTEDPNAQGSVNLDKVLPGEVQSMRWIFENWALDSIGDHQATKKMMEDEIIPGGDVKSTSLRFENQSVNGDYLSTTAKVSETDLARGDVHTARWLFETQPLDSLNKLYSDETEMQEAVLKEPVQGGDVKGAKELFEAQSLDAIGRCCSVEEKSILQLKSEIQELKGDVKKTIRLFQTEPLCAIRDKTGNIHEIKSVCREEIQSNAVRTARWLFETQPLDTINKDTSKVQIIRGISLEEIGRPDVSGARWIFETQPLDAIREITVEEQDFKASTDFVTGADVTKQRLLFGTQALDSLKGEASESVAAKEQVIGGDVKSTLWLFETQPMETLKDNVEVGHLKKVELSAEEKGDVKQRKHVFETCPLGSISKAFEEEISAASTEEVVKGDVKSFKTLFETLPLDSIKEVDAEPITKEEEKIPPGNVKANQILFETTPLYAIKDSFGNFHEVTSVSREQVISGDVKKYKWMFETRPLDQFDESTKKVDIIRGITKQEVVAGDVRTAKWLFETQPMDVIHHQATQGEEHPSMKREISQRGDVKTCRWLFETQPMHTLYEKAEKKQEEDVSVPQADVKSYTWMFETQPLDSLKGQEEQYLRVSKAYSQDELQGVDVKTVRHLFETEPLGSSVVSEADQKKTLRYSSRVEIQSGEVSRVKEFFEAKPLDTTTKPTAVIKDDGTIEAGSVHKFTWLFENYPMDTLKDSSEGIQEIPPEKDIKGGDVGGKRFIFETYSLDQIHDKVDETELHKIQKDTMSKANVKSCTMLFESQPLYAIQDKEGGYHEVTSVQKEEIMKGDVKGARWLFETKPLDQIKKEEEVFVIRAVTQEDIKKGDVQAARWRFETEPLDSFPGGKISVPRTVDDVQKGDVQSNKQLFESQQVGQKKYVRMVSVSDVQRGDVRTSTWLFENQPVDSLYGDADRSSSISTVQREDSQKGDVKRCTWLFETQPMDTLKDPEVTVSTGTQEPIPRADVKSTTWLFESTPLDKFSASECSRETELKERTMRETLETLCTCQAIQHDGILIEANDTESVKMVKYQLSSPGAPEILKEEIVRGHLQGIMLQLLHRTNVEPQSVLVEEDREGKIKVSSLQLLDQSEAIKGKEDLSGNVAKALQSLLSQDASIKKGMVIQETKSESVKMTLYSLLFHSVQQKVVKGDVKSTIGNLMASSQEQRATVTVKREDNEKGNVQLFASCIEKGDLDYLKNLQQESEIQSLISAQAEQGAAESAPRALQSTNTHVLANKEQVEKVMAEAKSGALEGAKMVFACESTGKEGALEREVVHAVGVTGTTVQCLGKPQNLPTGMEKEEIMSGGLKVTTKSIQRVADVSKNTEKEESISACLKEPKATMQGIAQAKVTAERNEVVGEQQSLVTEQASQKQSEEKVLGNDLQAAMQSLRLATAEARNIQHHVQSKLQRNREEVHMACRQQVASKQETKTLQSTIHQQESASTMRENTSTAIRTSTTRVQEASRTHTSVSQKSIASHKKVSASEEVQGGQLLSQENQVVPSRDVSIKDGLYTATPVKTYINPFVESDYKEQSVQEERDVIIRGDVQTAIRALQSAATEQRLVEKEDIVRGNLKATLQSLEKSNVNVSKGDFKAAMIYRNAGQSYSVCKKKSETQVNNNQTAVVASGSQADNDFPPPPPVAVMKAEHCPPSTKATREGAPPLLTSKDEAPGCFSPLQTPLPPPPSLSCKPSDQNSTEKPKIPPKPEITAPLRKKPVPPPKPEHLLHEAYSASTNNSTNRSTKSVPPPVPPKPPGLREISMPKPPPAELQLSCTEVCEQSDHRESQDKCCTLESSMDKSITVHGPERKLPKYTAKTPLQMAEERYKARKGGQGKFELDRAKPSKPVKNGEVG.

Residues 1-41 (MAEPQKSSKVAIKKMEDDLPPPPIPDSIQVIAPASQDPNPL) form a disordered region. Xin repeat units lie at residues 108 to 123 (GEVQ…WALD), 143 to 158 (GDVK…QSVN), 176 to 191 (GDVH…QPLD), 215 to 230 (GDVK…QSLD), 255 to 270 (GDVK…EPLC), 293 to 308 (NAVR…QPLD), 331 to 346 (PDVS…QPLD), 368 to 383 (ADVT…QALD), 402 to 417 (GDVK…QPME), 439 to 454 (GDVK…CPLG), 475 to 490 (GDVK…LPLD), 510 to 525 (GNVK…TPLY), 548 to 563 (GDVK…RPLD), 586 to 601 (GDVR…QPMD), 624 to 639 (GDVK…QPMH), 658 to 673 (ADVK…QPLD), 697 to 712 (VDVK…EPLG), 736 to 751 (GEVS…KPLD), 769 to 784 (GSVH…YPMD), 805 to 820 (GDVG…YSLD), 842 to 857 (ANVK…QPLY), 880 to 895 (GDVK…KPLD), 917 to 932 (GDVQ…EPLD), 951 to 966 (GDVQ…QQVG), 982 to 997 (GDVR…QPVD), 1020 to 1035 (GDVK…QPMD), and 1055 to 1070 (ADVK…TPLD). Over residues 1514-1565 (ASKQETKTLQSTIHQQESASTMRENTSTAIRTSTTRVQEASRTHTSVSQKSI) the composition is skewed to polar residues. Disordered regions lie at residues 1514–1568 (ASKQ…IASH), 1715–1856 (ASGS…PPPA), and 1914–1941 (YKAR…GEVG). Over residues 1820–1833 (SASTNNSTNRSTKS) the composition is skewed to low complexity. Pro residues predominate over residues 1834–1843 (VPPPVPPKPP).

The protein belongs to the Xin family. As to expression, expressed at intercalated disks in the heart (at protein level).

Its subcellular location is the cell junction. It is found in the adherens junction. It localises to the desmosome. Its function is as follows. Involved in cardiac morphogenesis, including heart midline formation, cardiac tubule looping, myocardial formation and maintenance of heart beat speed and rhythm. May protect actin filaments from depolymerization. May play a role in development of normal skeletal muscle morphology, muscle fiber type composition and regulation of muscle satellite cell activation and survival. This Gallus gallus (Chicken) protein is Xin actin-binding repeat-containing protein 1.